We begin with the raw amino-acid sequence, 139 residues long: D-ribose pyranase (139 aa).

The active-site Proton donor is His20. Substrate-binding positions include Asp28, His106, and 128–130; that span reads YAN.

Belongs to the RbsD / FucU family. RbsD subfamily. Homodecamer.

It localises to the cytoplasm. It catalyses the reaction beta-D-ribopyranose = beta-D-ribofuranose. The protein operates within carbohydrate metabolism; D-ribose degradation; D-ribose 5-phosphate from beta-D-ribopyranose: step 1/2. Its function is as follows. Catalyzes the interconversion of beta-pyran and beta-furan forms of D-ribose. The sequence is that of D-ribose pyranase from Escherichia coli O127:H6 (strain E2348/69 / EPEC).